We begin with the raw amino-acid sequence, 620 residues long: 1-deoxy-D-xylulose-5-phosphate synthase (620 aa).

Thiamine diphosphate is bound by residues His-80 and 121 to 123 (GHS). Mg(2+) is bound at residue Asp-152. Thiamine diphosphate is bound by residues 153–154 (GA), Asn-181, Tyr-288, and Glu-370. Position 181 (Asn-181) interacts with Mg(2+).

The protein belongs to the transketolase family. DXPS subfamily. As to quaternary structure, homodimer. The cofactor is Mg(2+). Thiamine diphosphate is required as a cofactor.

It carries out the reaction D-glyceraldehyde 3-phosphate + pyruvate + H(+) = 1-deoxy-D-xylulose 5-phosphate + CO2. It functions in the pathway metabolic intermediate biosynthesis; 1-deoxy-D-xylulose 5-phosphate biosynthesis; 1-deoxy-D-xylulose 5-phosphate from D-glyceraldehyde 3-phosphate and pyruvate: step 1/1. Catalyzes the acyloin condensation reaction between C atoms 2 and 3 of pyruvate and glyceraldehyde 3-phosphate to yield 1-deoxy-D-xylulose-5-phosphate (DXP). The protein is 1-deoxy-D-xylulose-5-phosphate synthase of Salmonella paratyphi A (strain ATCC 9150 / SARB42).